Consider the following 310-residue polypeptide: Ribosomal RNA small subunit methyltransferase H (310 aa).

Residues 32-34 (GGH), Asp-52, Phe-79, Asp-100, and Gln-107 contribute to the S-adenosyl-L-methionine site.

The protein belongs to the methyltransferase superfamily. RsmH family.

It localises to the cytoplasm. It carries out the reaction cytidine(1402) in 16S rRNA + S-adenosyl-L-methionine = N(4)-methylcytidine(1402) in 16S rRNA + S-adenosyl-L-homocysteine + H(+). Functionally, specifically methylates the N4 position of cytidine in position 1402 (C1402) of 16S rRNA. The protein is Ribosomal RNA small subunit methyltransferase H of Geobacillus thermodenitrificans (strain NG80-2).